The following is a 1044-amino-acid chain: Sarcoplasmic/endoplasmic reticulum calcium ATPase 2 (1044 aa).

The Cytoplasmic portion of the chain corresponds to 1–48 (MENAHTKTVEEVLGHFGVNESTGLSLEQVKKLKERWGSNELPAEEGKT). Residue serine 38 is modified to Phosphoserine. Residues 49–69 (LLELVIEQFEDLLVRILLLAA) traverse the membrane as a helical segment. The Lumenal portion of the chain corresponds to 70–89 (CISFVLAWFEEGEETITAFV). A helical membrane pass occupies residues 90-110 (EPFVILLILVANAIVGVWQER). Over 111–253 (NAENAIEALK…QERTPLQQKL (143 aa)) the chain is Cytoplasmic. Residues 254 to 273 (DEFGEQLSKVISLICIAVWI) traverse the membrane as a helical segment. Topologically, residues 274–295 (INIGHFNDPVHGGSWIRGAIYY) are lumenal. A 3'-nitrotyrosine mark is found at tyrosine 294 and tyrosine 295. A helical membrane pass occupies residues 296–313 (FKIAVALAVAAIPEGLPA). Ca(2+)-binding residues include valine 304, alanine 305, isoleucine 307, and glutamate 309. At 314-756 (VITTCLALGT…EEGRAIYNNM (443 aa)) the chain is on the cytoplasmic side. The 4-aspartylphosphate intermediate role is filled by aspartate 351. Residues aspartate 351 and threonine 353 each coordinate Mg(2+). Threonine 353 provides a ligand contact to ATP. Phosphothreonine is present on threonine 441. ATP is bound by residues glutamate 442, arginine 489, and lysine 514. Serine 531 carries the post-translational modification Phosphoserine. Arginine 559 provides a ligand contact to ATP. Positions 575–594 (MHLEDSANFIKYETNLTFVG) are interaction with HAX1. Serine 580 carries the post-translational modification Phosphoserine. ATP is bound by residues threonine 624, glycine 625, and aspartate 626. A phosphoserine mark is found at serine 661 and serine 663. 2 residues coordinate ATP: arginine 677 and lysine 683. Residue aspartate 702 participates in Mg(2+) binding. Residue asparagine 705 coordinates ATP. Residues 757–776 (KQFIRYLISSNVGEVVCIFL) traverse the membrane as a helical segment. Ca(2+) contacts are provided by asparagine 767 and glutamate 770. Residues 777-786 (TAALGFPEAL) lie on the Lumenal side of the membrane. Residues 787–807 (IPVQLLWVNLVTDGLPATALG) traverse the membrane as a helical segment. Residues 787–807 (IPVQLLWVNLVTDGLPATALG) are interaction with PLN. The interval 788-1044 (PVQLLWVNLV…DTNFSDMFWS (257 aa)) is interaction with TMEM64 and PDIA3. The Ca(2+) site is built by asparagine 795, threonine 798, and aspartate 799. The Cytoplasmic segment spans residues 808-827 (FNPPDLDIMNKPPRNPKEPL). A helical transmembrane segment spans residues 828–850 (ISGWLFFRYLAIGCYVGAATVGA). The Lumenal segment spans residues 851–896 (AAWWFIAADGGPRVSFYQLSHFLQCKEDNPDFDGVDCAIFESPYPM). Cysteine 875 and cysteine 887 are joined by a disulfide. A helical transmembrane segment spans residues 897-916 (TMALSVLVTIEMCNALNSLS). A Ca(2+)-binding site is contributed by glutamate 907. Residues 917–929 (ENQSLLRMPPWEN) are Cytoplasmic-facing. Residues 930–948 (IWLVGSICLSMSLHFLILY) form a helical membrane-spanning segment. Positions 931 to 942 (WLVGSICLSMSL) are interaction with PLN. At 949–963 (VEPLPLIFQITPLNL) the chain is on the lumenal side. Residues 964 to 984 (TQWLMVLKISLPVILMDETLK) form a helical membrane-spanning segment. Over 985 to 1044 (FVARNYLEQPGKECVQPATKSSCSLSACTDGISWPFVLLIMPLVVWVYSTDTNFSDMFWS) the chain is Cytoplasmic.

The protein belongs to the cation transport ATPase (P-type) (TC 3.A.3) family. Type IIA subfamily. Interacts with sarcolipin (SLN); the interaction inhibits ATP2A2 Ca(2+) affinity. Interacts with phospholamban (PLN); the interaction inhibits ATP2A2 Ca(2+) affinity. Interacts with myoregulin (MRLN). Interacts with ARLN and ERLN; the interactions inhibit ATP2A2 Ca(2+) affinity. Interacts with STRIT1/DWORF; the interaction results in activation of ATP2A2. Interacts with the monomeric forms of SLN, PLN, ARLN, ERLN and STRI1/DWORF. Interacts with HAX1. Interacts with S100A8 and S100A9. Interacts with SLC35G1 and STIM1. Interacts with TMEM203. Interacts with TMEM64 and PDIA3. Interacts with TMX1. Interacts with TMX2. Interacts with VMP1; VMP1 competes with PLN and SLN to prevent them from forming an inhibitory complex with ATP2A2. Interacts with ULK1. Interacts with S100A1 in a Ca(2+)-dependent manner. Interacts with TUNAR. Interacts with FLVCR2; this interaction occurs in the absence of heme and promotes ATP2A2 proteasomal degradation; this complex is dissociated upon heme binding. Interacts with FNIP1. As to quaternary structure, interacts with TRAM2 (via C-terminus). It depends on Mg(2+) as a cofactor. Post-translationally, nitrated under oxidative stress. Nitration on the two tyrosine residues inhibits catalytic activity. In terms of processing, serotonylated on Gln residues by TGM2 in response to hypoxia, leading to its inactivation. As to expression, isoform 2 is highly expressed in heart and slow twitch skeletal muscle. Isoform 2 is widely expressed.

Its subcellular location is the endoplasmic reticulum membrane. It localises to the sarcoplasmic reticulum membrane. It catalyses the reaction Ca(2+)(in) + ATP + H2O = Ca(2+)(out) + ADP + phosphate + H(+). Its activity is regulated as follows. Has different conformational states with differential Ca2+ affinity. The E1 conformational state (active form) shows high Ca(2+) affinity, while the E2 state exhibits low Ca(2+) affinity. Binding of ATP allosterically increases its affinity for subsequent binding of Ca2+. Reversibly inhibited by phospholamban (PLN) at low calcium concentrations. PLN inhibits ATP2A2 Ca(2+) affinity by disrupting its allosteric activation by ATP. Inhibited by sarcolipin (SLN) and myoregulin (MRLN). The inhibition is blocked by VMP1. Enhanced by STRIT1/DWORF; STRIT1 increases activity by displacing sarcolipin (SLN), phospholamban (PLN) and myoregulin (MRLN). Stabilizes SERCA2 in its E2 state. Its function is as follows. This magnesium-dependent enzyme catalyzes the hydrolysis of ATP coupled with the translocation of calcium from the cytosol to the sarcoplasmic reticulum lumen. Involved in autophagy in response to starvation. Upon interaction with VMP1 and activation, controls ER-isolation membrane contacts for autophagosome formation. Also modulates ER contacts with lipid droplets, mitochondria and endosomes. In coordination with FLVCR2 mediates heme-stimulated switching from mitochondrial ATP synthesis to thermogenesis. In terms of biological role, involved in the regulation of the contraction/relaxation cycle. Acts as a regulator of TNFSF11-mediated Ca(2+) signaling pathways via its interaction with TMEM64 which is critical for the TNFSF11-induced CREB1 activation and mitochondrial ROS generation necessary for proper osteoclast generation. Association between TMEM64 and SERCA2 in the ER leads to cytosolic Ca(2+) spiking for activation of NFATC1 and production of mitochondrial ROS, thereby triggering Ca(2+) signaling cascades that promote osteoclast differentiation and activation. The protein is Sarcoplasmic/endoplasmic reticulum calcium ATPase 2 of Mus musculus (Mouse).